A 183-amino-acid chain; its full sequence is NADH-quinone oxidoreductase subunit A (183 aa).

The next 3 helical transmembrane spans lie at 11 to 31 (IIAF…VPLL), 63 to 83 (FYLV…LYAW), and 98 to 118 (VVIF…VGAL). The segment at 159 to 183 (TGQIPAQSSGRVKSKTTPALSSEKE) is disordered.

It belongs to the complex I subunit 3 family. In terms of assembly, NDH-1 is composed of 14 different subunits. Subunits NuoA, H, J, K, L, M, N constitute the membrane sector of the complex.

The protein localises to the cell inner membrane. It catalyses the reaction a quinone + NADH + 5 H(+)(in) = a quinol + NAD(+) + 4 H(+)(out). Functionally, NDH-1 shuttles electrons from NADH, via FMN and iron-sulfur (Fe-S) centers, to quinones in the respiratory chain. The immediate electron acceptor for the enzyme in this species is believed to be ubiquinone. Couples the redox reaction to proton translocation (for every two electrons transferred, four hydrogen ions are translocated across the cytoplasmic membrane), and thus conserves the redox energy in a proton gradient. The protein is NADH-quinone oxidoreductase subunit A of Acinetobacter baumannii (strain AYE).